A 109-amino-acid polypeptide reads, in one-letter code: Putative double-stranded DNA mimic protein KPK_2119 (109 aa).

The protein belongs to the putative dsDNA mimic protein family.

Functionally, may act as a double-stranded DNA (dsDNA) mimic. Probably regulates the activity of a dsDNA-binding protein. The chain is Putative double-stranded DNA mimic protein KPK_2119 from Klebsiella pneumoniae (strain 342).